The chain runs to 210 residues: Large ribosomal subunit protein uL4 (210 aa).

The interval 44–77 is disordered; sequence ARQGNASSKTRSEVRGGGRKPWRQKGTGRARAGS. The segment covering 60–71 has biased composition (basic residues); the sequence is GGRKPWRQKGTG.

Belongs to the universal ribosomal protein uL4 family. Part of the 50S ribosomal subunit.

Its function is as follows. One of the primary rRNA binding proteins, this protein initially binds near the 5'-end of the 23S rRNA. It is important during the early stages of 50S assembly. It makes multiple contacts with different domains of the 23S rRNA in the assembled 50S subunit and ribosome. In terms of biological role, forms part of the polypeptide exit tunnel. In Microcystis aeruginosa (strain NIES-843 / IAM M-2473), this protein is Large ribosomal subunit protein uL4.